We begin with the raw amino-acid sequence, 248 residues long: MKLDLVKRTFNYAVVNKPSGMVCDASHTNNIITALTNEFTKILPSVNSSQFRLVQRLDRFVTGGLVVARNKKWADKVRKSFFQEGTLRLTRRYVGLIALDQIPESTQGTIDFPIQALEKDYRGKNKSRELFTYSAVTHYKLIPSARRTIKGVFPVFQQGPILPIILELETGRKNQIRDHIIQKFGVPLLNDDNFSDFKLNSEIPKDVNSKLYKSNQIALHSGLVIMENNGISQQFLFPVNNAYDRELW.

Asp58 is a catalytic residue.

The protein belongs to the pseudouridine synthase RluA family.

The protein resides in the mitochondrion. The catalysed reaction is uridine(2819) in 21S rRNA = pseudouridine(2819) in 21S rRNA. Pseudouridylate synthase responsible for the pseudouridine-2819 formation in mitochondrial 21S rRNA. May modulate the efficiency or the fidelity of the mitochondrial translation machinery. The chain is 21S rRNA pseudouridine(2819) synthase (PUS5) from Candida albicans (strain SC5314 / ATCC MYA-2876) (Yeast).